The primary structure comprises 379 residues: Succinyl-diaminopimelate desuccinylase (379 aa).

His-70 contacts Zn(2+). Residue Asp-72 is part of the active site. Residue Asp-103 coordinates Zn(2+). Glu-137 (proton acceptor) is an active-site residue. Zn(2+) contacts are provided by Glu-138, Glu-166, and His-352.

The protein belongs to the peptidase M20A family. DapE subfamily. Homodimer. Requires Zn(2+) as cofactor. Co(2+) is required as a cofactor.

It catalyses the reaction N-succinyl-(2S,6S)-2,6-diaminopimelate + H2O = (2S,6S)-2,6-diaminopimelate + succinate. It functions in the pathway amino-acid biosynthesis; L-lysine biosynthesis via DAP pathway; LL-2,6-diaminopimelate from (S)-tetrahydrodipicolinate (succinylase route): step 3/3. In terms of biological role, catalyzes the hydrolysis of N-succinyl-L,L-diaminopimelic acid (SDAP), forming succinate and LL-2,6-diaminopimelate (DAP), an intermediate involved in the bacterial biosynthesis of lysine and meso-diaminopimelic acid, an essential component of bacterial cell walls. The sequence is that of Succinyl-diaminopimelate desuccinylase from Paraburkholderia xenovorans (strain LB400).